The sequence spans 389 residues: Indole-3-acetate monooxygenase (389 aa).

It belongs to the HpaH/HsaA monooxygenase family.

The enzyme catalyses (indol-3-yl)acetate + NADH + O2 + H(+) = 2-hydroxy-(1H-indol-3-yl)acetate + NAD(+) + H2O. It carries out the reaction indole + NADH + O2 + H(+) = indoxyl + NAD(+) + H2O. Its function is as follows. Involved in the degradation of the plant hormone indole-3-acetic acid (IAA). Catalyzes the first step of the pathway, the conversion of IAA to 2-hydroxy-IAA (2-OH-IAA). Can also convert indole to indoxyl, which spontaneously dimerizes in the presence of oxygen to form the blue pigment indigo. The sequence is that of Indole-3-acetate monooxygenase from Pseudomonas putida (Arthrobacter siderocapsulatus).